The chain runs to 201 residues: Orotate phosphoribosyltransferase (201 aa).

Residues lysine 90 and 113–121 each bind 5-phospho-alpha-D-ribose 1-diphosphate; that span reads EDIITTGGS. Orotate-binding residues include threonine 117 and arginine 145.

It belongs to the purine/pyrimidine phosphoribosyltransferase family. PyrE subfamily. Homodimer. Mg(2+) is required as a cofactor.

The catalysed reaction is orotidine 5'-phosphate + diphosphate = orotate + 5-phospho-alpha-D-ribose 1-diphosphate. It participates in pyrimidine metabolism; UMP biosynthesis via de novo pathway; UMP from orotate: step 1/2. In terms of biological role, catalyzes the transfer of a ribosyl phosphate group from 5-phosphoribose 1-diphosphate to orotate, leading to the formation of orotidine monophosphate (OMP). In Sulfurovum sp. (strain NBC37-1), this protein is Orotate phosphoribosyltransferase.